Reading from the N-terminus, the 521-residue chain is Putative FNIP repeat-containing protein L162 (521 aa).

2 FNIP repeats span residues 179–221 and 222–263; these read FNKS…LGYK and YNYP…MGGR.

This Acanthamoeba polyphaga mimivirus (APMV) protein is Putative FNIP repeat-containing protein L162.